Here is a 255-residue protein sequence, read N- to C-terminus: Vitamin B12 import ATP-binding protein BtuD (255 aa).

The region spanning 2–240 is the ABC transporter domain; the sequence is MHVKHIALGS…EGLAEVFQTQ (239 aa). 30-37 lines the ATP pocket; the sequence is GPNGSGKS.

This sequence belongs to the ABC transporter superfamily. Vitamin B12 importer (TC 3.A.1.13.1) family. In terms of assembly, the complex is composed of two ATP-binding proteins (BtuD), two transmembrane proteins (BtuC) and a solute-binding protein (BtuF).

It localises to the cell inner membrane. The catalysed reaction is an R-cob(III)alamin(out) + ATP + H2O = an R-cob(III)alamin(in) + ADP + phosphate + H(+). In terms of biological role, part of the ABC transporter complex BtuCDF involved in vitamin B12 import. Responsible for energy coupling to the transport system. The protein is Vitamin B12 import ATP-binding protein BtuD of Vibrio campbellii (strain ATCC BAA-1116).